A 154-amino-acid chain; its full sequence is Large ribosomal subunit protein uL13 (154 aa).

The protein belongs to the universal ribosomal protein uL13 family. As to quaternary structure, part of the 50S ribosomal subunit.

In terms of biological role, this protein is one of the early assembly proteins of the 50S ribosomal subunit, although it is not seen to bind rRNA by itself. It is important during the early stages of 50S assembly. The sequence is that of Large ribosomal subunit protein uL13 from Rhizobium rhizogenes (strain K84 / ATCC BAA-868) (Agrobacterium radiobacter).